The primary structure comprises 140 residues: Relaxin-3 (140 aa).

The N-terminal stretch at 1 to 23 (MATRGLLLASWALLGALVLQAEA) is a signal peptide. Cystine bridges form between cysteine 33–cysteine 127, cysteine 45–cysteine 140, and cysteine 126–cysteine 131. The propeptide at 53–116 (ADILAHDPLG…GSPGVVRGSR (64 aa)) is connecting peptide.

It belongs to the insulin family. Heterodimer of a B chain and an A chain linked by two disulfide bonds. In terms of tissue distribution, highly abundant expression is detected in neurons within the ventomedial dorsal tegmental nucleus and the laterally central gray alpha of the pons. Also detected at much lower levels within the hippocampus.

It is found in the secreted. Functionally, may play a role in neuropeptide signaling processes. Ligand for LGR7, relaxin-3 receptor-1 and relaxin-3 receptor-2. The protein is Relaxin-3 (Rln3) of Rattus norvegicus (Rat).